A 464-amino-acid chain; its full sequence is Probable multidrug resistance protein NorM (464 aa).

12 helical membrane-spanning segments follow: residues 22 to 42, 64 to 84, 104 to 124, 142 to 162, 172 to 192, 204 to 224, 258 to 278, 288 to 308, 326 to 346, 358 to 378, 384 to 404, and 410 to 430; these read LIKLALPAMGENVLQMLFGMA, VFWVVQVVLIAASMGATVTIA, FLAIFTGVILTALTPLSDVLI, LKVILSGSMGFSIMAVFSAML, MIVTGLTNFLNIFLDYAMIFG, AAVATILSRFVGAGILTYVIF, FVFSTGVLMFANILLIAGAEA, VESLSFMPAFGISVAITTLVG, GWILSLLFQVTVGIIIFLFPE, IIEISKLPVKIIGLFQFFLAI, GALRGTGNTLPPMIITFISIW, and VAFVMVKYFQLGLLGAWIGMI.

This sequence belongs to the multi antimicrobial extrusion (MATE) (TC 2.A.66.1) family.

The protein localises to the cell membrane. In terms of biological role, multidrug efflux pump. The chain is Probable multidrug resistance protein NorM (norM) from Thermotoga maritima (strain ATCC 43589 / DSM 3109 / JCM 10099 / NBRC 100826 / MSB8).